A 256-amino-acid polypeptide reads, in one-letter code: Flap endonuclease Xni (256 aa).

Residue aspartate 105 coordinates Mg(2+). Positions 164–250 constitute a 5'-3' exonuclease domain; the sequence is SQFIDFLAMA…LNTRLANFRV (87 aa). Methionine 172, alanine 173, proline 181, isoleucine 183, and isoleucine 186 together coordinate K(+). The interval 185–190 is interaction with DNA; sequence GIGPKS.

The protein belongs to the Xni family. Mg(2+) serves as cofactor. The cofactor is K(+).

Its function is as follows. Has flap endonuclease activity. During DNA replication, flap endonucleases cleave the 5'-overhanging flap structure that is generated by displacement synthesis when DNA polymerase encounters the 5'-end of a downstream Okazaki fragment. In Shewanella loihica (strain ATCC BAA-1088 / PV-4), this protein is Flap endonuclease Xni.